The chain runs to 256 residues: LexA repressor (256 aa).

Positions 1 to 31 (MTSQGRGTRRGGTRGNVRAFPEGPTDAGLTP) are disordered. The segment at residues 53–73 (VREIGEAVGLTSTSSVAHQLK) is a DNA-binding region (H-T-H motif). Catalysis depends on for autocatalytic cleavage activity residues serine 180 and lysine 217.

This sequence belongs to the peptidase S24 family. As to quaternary structure, homodimer.

The enzyme catalyses Hydrolysis of Ala-|-Gly bond in repressor LexA.. Its function is as follows. Represses a number of genes involved in the response to DNA damage (SOS response), including recA and lexA. In the presence of single-stranded DNA, RecA interacts with LexA causing an autocatalytic cleavage which disrupts the DNA-binding part of LexA, leading to derepression of the SOS regulon and eventually DNA repair. The chain is LexA repressor from Frankia casuarinae (strain DSM 45818 / CECT 9043 / HFP020203 / CcI3).